The following is a 418-amino-acid chain: Serine--tRNA ligase (418 aa).

228 to 230 (TSE) provides a ligand contact to L-serine. ATP contacts are provided by residues 258-260 (RKE) and valine 274. An L-serine-binding site is contributed by glutamate 281. An ATP-binding site is contributed by 345–348 (EVVS). Threonine 381 lines the L-serine pocket.

This sequence belongs to the class-II aminoacyl-tRNA synthetase family. Type-1 seryl-tRNA synthetase subfamily. Homodimer. The tRNA molecule binds across the dimer.

Its subcellular location is the cytoplasm. The enzyme catalyses tRNA(Ser) + L-serine + ATP = L-seryl-tRNA(Ser) + AMP + diphosphate + H(+). The catalysed reaction is tRNA(Sec) + L-serine + ATP = L-seryl-tRNA(Sec) + AMP + diphosphate + H(+). It participates in aminoacyl-tRNA biosynthesis; selenocysteinyl-tRNA(Sec) biosynthesis; L-seryl-tRNA(Sec) from L-serine and tRNA(Sec): step 1/1. Its function is as follows. Catalyzes the attachment of serine to tRNA(Ser). Is also able to aminoacylate tRNA(Sec) with serine, to form the misacylated tRNA L-seryl-tRNA(Sec), which will be further converted into selenocysteinyl-tRNA(Sec). The chain is Serine--tRNA ligase from Cenarchaeum symbiosum (strain A).